The chain runs to 338 residues: D-alanine--D-alanine ligase (338 aa).

In terms of domain architecture, ATP-grasp spans Lys-120–Lys-324. Position 150-205 (Pro-150–Thr-205) interacts with ATP. Mg(2+) contacts are provided by Asp-277, Glu-291, and Asn-293.

It belongs to the D-alanine--D-alanine ligase family. The cofactor is Mg(2+). Mn(2+) serves as cofactor.

It is found in the cytoplasm. The catalysed reaction is 2 D-alanine + ATP = D-alanyl-D-alanine + ADP + phosphate + H(+). The protein operates within cell wall biogenesis; peptidoglycan biosynthesis. In terms of biological role, cell wall formation. The chain is D-alanine--D-alanine ligase from Polaromonas sp. (strain JS666 / ATCC BAA-500).